Reading from the N-terminus, the 382-residue chain is Lipid-A-disaccharide synthase (382 aa).

This sequence belongs to the LpxB family.

It carries out the reaction 2-N,3-O-bis[(3R)-3-hydroxytetradecanoyl]-alpha-D-glucosaminyl 1-phosphate + UDP-2-N,3-O-bis[(3R)-3-hydroxytetradecanoyl]-alpha-D-glucosamine = lipid A disaccharide (E. coli) + UDP + H(+). The catalysed reaction is a lipid X + a UDP-2-N,3-O-bis[(3R)-3-hydroxyacyl]-alpha-D-glucosamine = a lipid A disaccharide + UDP + H(+). It functions in the pathway glycolipid biosynthesis; lipid IV(A) biosynthesis; lipid IV(A) from (3R)-3-hydroxytetradecanoyl-[acyl-carrier-protein] and UDP-N-acetyl-alpha-D-glucosamine: step 5/6. Its function is as follows. Condensation of UDP-2,3-diacylglucosamine and 2,3-diacylglucosamine-1-phosphate to form lipid A disaccharide, a precursor of lipid A, a phosphorylated glycolipid that anchors the lipopolysaccharide to the outer membrane of the cell. This is Lipid-A-disaccharide synthase from Salmonella paratyphi A (strain AKU_12601).